We begin with the raw amino-acid sequence, 469 residues long: Glutamate--tRNA ligase (469 aa).

Residues 11-21 (PSPTGFIHLGN) carry the 'HIGH' region motif. Basic and acidic residues predominate over residues 114–131 (QREAGEKPRYDGTWRPEP). Residues 114 to 139 (QREAGEKPRYDGTWRPEPGKVLPEPP) form a disordered region. A 'KMSKS' region motif is present at residues 243–247 (KMSKR). Position 246 (K246) interacts with ATP.

Belongs to the class-I aminoacyl-tRNA synthetase family. Glutamate--tRNA ligase type 1 subfamily. In terms of assembly, monomer.

The protein resides in the cytoplasm. It carries out the reaction tRNA(Glu) + L-glutamate + ATP = L-glutamyl-tRNA(Glu) + AMP + diphosphate. Functionally, catalyzes the attachment of glutamate to tRNA(Glu) in a two-step reaction: glutamate is first activated by ATP to form Glu-AMP and then transferred to the acceptor end of tRNA(Glu). In Paraburkholderia phytofirmans (strain DSM 17436 / LMG 22146 / PsJN) (Burkholderia phytofirmans), this protein is Glutamate--tRNA ligase.